A 257-amino-acid chain; its full sequence is Large ribosomal subunit protein bL28m (257 aa).

The transit peptide at Met1–Lys55 directs the protein to the mitochondrion.

It belongs to the bacterial ribosomal protein bL28 family. Component of the mitochondrial ribosome large subunit (39S) which comprises a 16S rRNA and about 50 distinct proteins. Interacts with OXA1L.

The protein resides in the mitochondrion. This Mus musculus (Mouse) protein is Large ribosomal subunit protein bL28m (Mrpl28).